A 346-amino-acid polypeptide reads, in one-letter code: Cobalt transport protein CbiM (346 aa).

The N-terminal stretch at 1 to 25 (MKRITLYAAGSAIIGAMLLAGPAHA) is a signal peptide. A run of 8 helical transmembrane segments spans residues 31-51 (GILP…FLAL), 68-88 (PLVG…IPVP), 101-121 (IAAI…ALLI), 133-153 (TLGA…WFVF), 159-179 (LGAG…WATY), 196-216 (FYPL…PLGV), 255-275 (ATVV…AGPS), and 312-332 (LLLF…GYFW).

The protein belongs to the CbiM family. In terms of assembly, forms an energy-coupling factor (ECF) transporter complex composed of an ATP-binding protein (A component, CbiO), a transmembrane protein (T component, CbiQ) and 2 possible substrate-capture proteins (S components, CbiM and CbiN) of unknown stoichimetry.

It localises to the cell inner membrane. It functions in the pathway cofactor biosynthesis; adenosylcobalamin biosynthesis. Its function is as follows. Part of the energy-coupling factor (ECF) transporter complex CbiMNOQ involved in cobalt import. This chain is Cobalt transport protein CbiM, found in Geobacter sulfurreducens (strain ATCC 51573 / DSM 12127 / PCA).